The primary structure comprises 336 residues: Eukaryotic translation initiation factor 3 subunit I (336 aa).

6 WD repeats span residues 8–49, 50–91, 93–135, 144–183, 187–226, and 285–324; these read GHER…GTYN, GHNG…KAWE, PTAI…GPQP, PIGSKAQVVAFSSLDKHLITGHENGKVALWDVNTGEEVAS, NHIGLITDLQMSADRTYFVTSSKDKSARLYDSRTLEVIKS, and GGFGPCNSIAVHPEGKGYAIGGEDGYVRLHHFDENTFRAK.

Belongs to the eIF-3 subunit I family. As to quaternary structure, component of the eukaryotic translation initiation factor 3 (eIF-3) complex.

It localises to the cytoplasm. In terms of biological role, component of the eukaryotic translation initiation factor 3 (eIF-3) complex, which is involved in protein synthesis of a specialized repertoire of mRNAs and, together with other initiation factors, stimulates binding of mRNA and methionyl-tRNAi to the 40S ribosome. The eIF-3 complex specifically targets and initiates translation of a subset of mRNAs involved in cell proliferation. This is Eukaryotic translation initiation factor 3 subunit I from Puccinia graminis f. sp. tritici (strain CRL 75-36-700-3 / race SCCL) (Black stem rust fungus).